Consider the following 158-residue polypeptide: MALLTNGKGFIRALEKSGSLAVYAPLEGGFEGRYQRRLRTNGYHTFSLTARGLGDVSAYLMGVHGVRPPHLGKKNIGQEAAVGPVYFVPPIAAYQLETLPPKSKGLVLWILEGFILSQTELEYLANLPTLEPRLKVVIELGGERYFSWKPLPEVIKVA.

The protein belongs to the complex I NdhN subunit family. As to quaternary structure, NDH-1 can be composed of about 15 different subunits; different subcomplexes with different compositions have been identified which probably have different functions.

Its subcellular location is the cellular thylakoid membrane. It catalyses the reaction a plastoquinone + NADH + (n+1) H(+)(in) = a plastoquinol + NAD(+) + n H(+)(out). It carries out the reaction a plastoquinone + NADPH + (n+1) H(+)(in) = a plastoquinol + NADP(+) + n H(+)(out). In terms of biological role, NDH-1 shuttles electrons from an unknown electron donor, via FMN and iron-sulfur (Fe-S) centers, to quinones in the respiratory and/or the photosynthetic chain. The immediate electron acceptor for the enzyme in this species is believed to be plastoquinone. Couples the redox reaction to proton translocation, and thus conserves the redox energy in a proton gradient. Cyanobacterial NDH-1 also plays a role in inorganic carbon-concentration. The sequence is that of NAD(P)H-quinone oxidoreductase subunit N from Rippkaea orientalis (strain PCC 8801 / RF-1) (Cyanothece sp. (strain PCC 8801)).